The sequence spans 290 residues: MPLLTLYLLLFWLSGYSIVTQITGPTTVNGLERGSLTVQCVYRSGWETYLKWWCRGAIWRDCKILVKTSGSEQEVKRDRVSIKDNQKNRTFTVTMEDLMKTDADTYWCGIEKTGNDLGVTVQVTIDPAPVTQEETSSSPTLTGHHLDNRHKLLKLSVLLPLIFTILLLLLVAASLLAWRMMKYQQKAAGMSPEQVLQPLEGDLCYADLTLQLAGTSPQKATTKLSSAQVDQVEVEYVTMASLPKEDISYASLTLGAEDQEPTYCNMGHLSSHLPGRGPEEPTEYSTISRP.

An N-terminal signal peptide occupies residues 1–19 (MPLLTLYLLLFWLSGYSIV). One can recognise an Ig-like V-type domain in the interval 20–126 (TQITGPTTVN…LGVTVQVTID (107 aa)). Over 20 to 156 (TQITGPTTVN…DNRHKLLKLS (137 aa)) the chain is Extracellular. 2 disulfides stabilise this stretch: cysteine 40–cysteine 108 and cysteine 54–cysteine 62. The N-linked (GlcNAc...) asparagine glycan is linked to asparagine 88. Residues 157–177 (VLLPLIFTILLLLLVAASLLA) traverse the membrane as a helical segment. At 178–290 (WRMMKYQQKA…PTEYSTISRP (113 aa)) the chain is on the cytoplasmic side. Positions 267–290 (GHLSSHLPGRGPEEPTEYSTISRP) are disordered.

Belongs to the CD300 family. Interacts with PTPN6/SHP-1 in a tyrosine phosphorylation dependent manner. Interacts with IL4R. In terms of processing, phosphorylated on tyrosine. In terms of tissue distribution, highly expressed in spleen, peripheral blood leukocyte and monocyte, and lung. Weakly expressed in thymus, heart, brain, placenta, liver, skeletal muscle, kidney, pancreas, prostate, testis, ovary, small intestine or colon. Expressed selectively in monocytes and monocyte-related cells.

It localises to the cell membrane. In terms of biological role, acts as an inhibitory receptor for myeloid cells and mast cells. Positively regulates the phagocytosis of apoptotic cells (efferocytosis) via phosphatidylserine (PS) recognition; recognizes and binds PS as a ligand which is expressed on the surface of apoptotic cells. Plays an important role in the maintenance of immune homeostasis, by promoting macrophage-mediated efferocytosis and by inhibiting dendritic cell-mediated efferocytosis. Negatively regulates Fc epsilon receptor-dependent mast cell activation and allergic responses via binding to ceramide and sphingomyelin which act as ligands. May act as a coreceptor for interleukin 4 (IL-4). Associates with and regulates IL-4 receptor alpha-mediated responses by augmenting IL-4- and IL-13-induced signaling. Negatively regulates the Toll-like receptor (TLR) signaling mediated by MYD88 and TRIF through activation of PTPN6/SHP-1 and PTPN11/SHP-2. Inhibits osteoclast formation. Induces macrophage cell death upon engagement. The chain is CMRF35-like molecule 1 (CD300LF) from Homo sapiens (Human).